Consider the following 354-residue polypeptide: UPF0421 protein BH2644 (354 aa).

A run of 4 helical transmembrane segments spans residues 22–42 (AVCL…FAVI), 60–80 (LIRL…AYFF), 107–127 (TLVA…HLFA), and 133–153 (VAGT…ILPP).

This sequence belongs to the UPF0421 family.

The protein localises to the cell membrane. The chain is UPF0421 protein BH2644 from Halalkalibacterium halodurans (strain ATCC BAA-125 / DSM 18197 / FERM 7344 / JCM 9153 / C-125) (Bacillus halodurans).